The sequence spans 201 residues: LIM domain-containing protein PLIM2b (201 aa).

2 LIM zinc-binding domains span residues 8 to 68 (DKCT…LFKE) and 103 to 163 (DKCA…LFME). The disordered stretch occupies residues 171–201 (KKKSESQEVLPEVVPEEQPAPPPPDENREDN). Low complexity predominate over residues 177-187 (QEVLPEVVPEE).

In terms of assembly, interacts with NEK3.

In Oryza sativa subsp. japonica (Rice), this protein is LIM domain-containing protein PLIM2b.